Reading from the N-terminus, the 71-residue chain is Brevinin-1SN1 (71 aa).

Residues 1–22 form the signal peptide; sequence MFTMKKPLLLLFFLGTINLSLC. Positions 23 to 45 are cleaved as a propeptide — removed in mature form; the sequence is EEERNADEEEKRDGDDEMDAEVE. An intrachain disulfide couples Cys65 to Cys71.

This sequence belongs to the frog skin active peptide (FSAP) family. Brevinin subfamily. As to expression, expressed by the skin glands.

It localises to the secreted. Functionally, antimicrobial peptide. Active against some Gram-negative and a variety of Gram-positive bacterial strains. Active against fungus C.glabrata 090902 but not against C.albicans ATCC 10231. Shows hemolytic activity against human erythrocytes. The chain is Brevinin-1SN1 from Sylvirana spinulosa (Fine-spined frog).